The chain runs to 405 residues: Tryptophan synthase beta chain (405 aa).

Lys-98 is subject to N6-(pyridoxal phosphate)lysine.

It belongs to the TrpB family. In terms of assembly, tetramer of two alpha and two beta chains. Requires pyridoxal 5'-phosphate as cofactor.

It catalyses the reaction (1S,2R)-1-C-(indol-3-yl)glycerol 3-phosphate + L-serine = D-glyceraldehyde 3-phosphate + L-tryptophan + H2O. The protein operates within amino-acid biosynthesis; L-tryptophan biosynthesis; L-tryptophan from chorismate: step 5/5. The beta subunit is responsible for the synthesis of L-tryptophan from indole and L-serine. The polypeptide is Tryptophan synthase beta chain (Afipia carboxidovorans (strain ATCC 49405 / DSM 1227 / KCTC 32145 / OM5) (Oligotropha carboxidovorans)).